Here is a 1159-residue protein sequence, read N- to C-terminus: ATP-dependent helicase/deoxyribonuclease subunit B (1159 aa).

The protein belongs to the helicase family. AddB/RexB type 2 subfamily. Heterodimer of AddA and RexB. The cofactor is Mg(2+).

Functionally, the heterodimer acts as both an ATP-dependent DNA helicase and an ATP-dependent, dual-direction single-stranded exonuclease. Recognizes the chi site generating a DNA molecule suitable for the initiation of homologous recombination. This subunit has 5' -&gt; 3' nuclease activity but not helicase activity. The polypeptide is ATP-dependent helicase/deoxyribonuclease subunit B (Leuconostoc mesenteroides subsp. mesenteroides (strain ATCC 8293 / DSM 20343 / BCRC 11652 / CCM 1803 / JCM 6124 / NCDO 523 / NBRC 100496 / NCIMB 8023 / NCTC 12954 / NRRL B-1118 / 37Y)).